The chain runs to 356 residues: sn-glycerol-3-phosphate import ATP-binding protein UgpC (356 aa).

Residues 4-235 form the ABC transporter domain; the sequence is LKLQAVTKSW…PASLFVASFI (232 aa). ATP is bound at residue 37-44; it reads GPSGCGKS.

It belongs to the ABC transporter superfamily. sn-glycerol-3-phosphate importer (TC 3.A.1.1.3) family. In terms of assembly, the complex is composed of two ATP-binding proteins (UgpC), two transmembrane proteins (UgpA and UgpE) and a solute-binding protein (UgpB).

Its subcellular location is the cell inner membrane. The catalysed reaction is sn-glycerol 3-phosphate(out) + ATP + H2O = sn-glycerol 3-phosphate(in) + ADP + phosphate + H(+). In terms of biological role, part of the ABC transporter complex UgpBAEC involved in sn-glycerol-3-phosphate (G3P) import. Responsible for energy coupling to the transport system. In Escherichia coli O6:K15:H31 (strain 536 / UPEC), this protein is sn-glycerol-3-phosphate import ATP-binding protein UgpC.